The following is a 193-amino-acid chain: Ion-translocating oxidoreductase complex subunit A (193 aa).

6 helical membrane passes run 5 to 25, 39 to 59, 62 to 82, 102 to 122, 134 to 154, and 172 to 192; these read ALLLLSTALVNNVVLVKFLGL, LGMGLATTFVITLAAAASWML, WLLAPFDLGFLRILSFILVIA, SLGIYLPLITTNCAVLGVALL, VLFGFGSALGFTLVLLIFAGL, and AAFITISLLSLAFMGLSGLVA.

Belongs to the NqrDE/RnfAE family. The complex is composed of six subunits: RnfA, RnfB, RnfC, RnfD, RnfE and RnfG.

It is found in the cell inner membrane. Its function is as follows. Part of a membrane-bound complex that couples electron transfer with translocation of ions across the membrane. This chain is Ion-translocating oxidoreductase complex subunit A, found in Aromatoleum aromaticum (strain DSM 19018 / LMG 30748 / EbN1) (Azoarcus sp. (strain EbN1)).